Reading from the N-terminus, the 580-residue chain is Tetratricopeptide repeat protein 39C (580 aa).

TPR repeat units follow at residues 312-345, 350-383, and 482-515; these read SLFM…AVDQ, HVCL…SRWS, and GLKH…ELCR.

This sequence belongs to the TTC39 family.

The sequence is that of Tetratricopeptide repeat protein 39C (Ttc39c) from Mus musculus (Mouse).